The sequence spans 592 residues: Solute carrier family 13 member 2 (592 aa).

Transmembrane regions (helical) follow at residues 13 to 33 (SYLIVFFVPILLLPLPILVPS), 53 to 73 (ALPLAVTALFPLILFPMMGIV), 86 to 106 (SNLLFFGGLLVAIAVEHWNLH), and 114 to 134 (LLIVGVRPAPLILGFMLVTAF). A compositionally biased stretch (polar residues) spans 165–177 (SSNVEEGSNNPTF). The tract at residues 165 to 185 (SSNVEEGSNNPTFELQEPSPQ) is disordered. 8 consecutive transmembrane segments (helical) span residues 221–241 (MSLCVCYSASIGGIATLTGTA), 274–294 (MVILLLLAWLWLQILFLGFNF), 324–344 (PMTFAEKAISILFVILVLLWF), 371–391 (GTVAIFIGIIMFIIPSKFPGL), 450–470 (PLQSVPAPAIAIILSLLVATF), 482–502 (IFLPILASMAQAICLHPLYVM), 511–531 (LAFMLPVATPPNAIVFSFGDL), and 545–565 (IIGVLIIALAINSWGIPLFSL).

This sequence belongs to the SLC13A/DASS transporter (TC 2.A.47) family. NADC subfamily. As to expression, expressed in kidney and intestine. In kidney expressed in the proximal tubule (at protein level).

It localises to the apical cell membrane. The catalysed reaction is succinate(out) + 3 Na(+)(out) = succinate(in) + 3 Na(+)(in). The enzyme catalyses fumarate(out) + 3 Na(+)(out) = fumarate(in) + 3 Na(+)(in). It catalyses the reaction 2-oxoglutarate(out) + 3 Na(+)(out) = 2-oxoglutarate(in) + 3 Na(+)(in). Its activity is regulated as follows. Li(+) decreases succinate transport in the presence of Na(+), by competing at one of the three cation binding sites. Low-affinity sodium-dicarboxylate cotransporter, that mediates the entry of citric acid cycle intermediates, such as succinate, citrate, fumarate and alpha-ketoglutarate (2-oxoglutarate) into the small intestine and renal proximal tubule. Transports the dicarboxylate into the cell with a probable stoichiometry of 3 Na(+) for 1 divalent dicarboxylate, rendering the process electrogenic. Citrate is transported in protonated form as a divalent anion, rather than the trivalent form which is normally found in blood. Has a critical role in renal dicarboxylate transport. This Homo sapiens (Human) protein is Solute carrier family 13 member 2 (SLC13A2).